The sequence spans 269 residues: 1-(5-phosphoribosyl)-5-[(5-phosphoribosylamino)methylideneamino] imidazole-4-carboxamide isomerase (269 aa).

Aspartate 10 serves as the catalytic Proton acceptor. The active-site Proton donor is the aspartate 132.

Belongs to the HisA/HisF family.

The protein localises to the cytoplasm. The enzyme catalyses 1-(5-phospho-beta-D-ribosyl)-5-[(5-phospho-beta-D-ribosylamino)methylideneamino]imidazole-4-carboxamide = 5-[(5-phospho-1-deoxy-D-ribulos-1-ylimino)methylamino]-1-(5-phospho-beta-D-ribosyl)imidazole-4-carboxamide. It participates in amino-acid biosynthesis; L-histidine biosynthesis; L-histidine from 5-phospho-alpha-D-ribose 1-diphosphate: step 4/9. The chain is 1-(5-phosphoribosyl)-5-[(5-phosphoribosylamino)methylideneamino] imidazole-4-carboxamide isomerase from Xylella fastidiosa (strain M12).